The following is a 503-amino-acid chain: Na(+)-translocating NADH-quinone reductase subunit B (503 aa).

Transmembrane regions (helical) follow at residues 55–75 (MMLV…NSGL), 94–114 (ISGF…VPIL), 120–140 (IFIP…VLFA), 161–181 (TLPP…GIVV), and 186–206 (FGGT…FLFF). T248 carries the FMN phosphoryl threonine modification. 5 helical membrane passes run 361–381 (TSTF…IASW), 386–406 (AFGI…VLIV), 417–437 (FFIP…LVFM), 452–472 (WIYG…NPAY), and 475–495 (GVML…YFAV).

This sequence belongs to the NqrB/RnfD family. Composed of six subunits; NqrA, NqrB, NqrC, NqrD, NqrE and NqrF. Requires FMN as cofactor.

It localises to the cell inner membrane. The catalysed reaction is a ubiquinone + n Na(+)(in) + NADH + H(+) = a ubiquinol + n Na(+)(out) + NAD(+). Its function is as follows. NQR complex catalyzes the reduction of ubiquinone-1 to ubiquinol by two successive reactions, coupled with the transport of Na(+) ions from the cytoplasm to the periplasm. NqrA to NqrE are probably involved in the second step, the conversion of ubisemiquinone to ubiquinol. This is Na(+)-translocating NADH-quinone reductase subunit B from Chlamydia pneumoniae (Chlamydophila pneumoniae).